Here is a 292-residue protein sequence, read N- to C-terminus: Hemin import ATP-binding protein HmuV (292 aa).

Residues 38 to 271 (LRADGIAVTR…ELLTRVYGHP (234 aa)) form the ABC transporter domain. An ATP-binding site is contributed by 70–77 (GPNGAGKS).

Belongs to the ABC transporter superfamily. Heme (hemin) importer (TC 3.A.1.14.5) family. The complex is composed of two ATP-binding proteins (HmuV), two transmembrane proteins (HmuU) and a solute-binding protein (HmuT).

The protein localises to the cell membrane. Its function is as follows. Part of the ABC transporter complex HmuTUV involved in hemin import. Responsible for energy coupling to the transport system. The sequence is that of Hemin import ATP-binding protein HmuV from Rhodococcus jostii (strain RHA1).